Here is a 255-residue protein sequence, read N- to C-terminus: Small ribosomal subunit protein uS2 (255 aa).

The protein belongs to the universal ribosomal protein uS2 family.

This is Small ribosomal subunit protein uS2 (rpsB) from Streptococcus pyogenes serotype M1.